The chain runs to 391 residues: Oocyte zinc finger protein XlCOF7.2 (391 aa).

C2H2-type zinc fingers lie at residues 284-306, 312-334, 340-362, and 368-391; these read FPCSECGKCFINQSTLARHYRTH, YPCSECGKCFASSTYLRDHRRIH, SSCSECGKYFLNCWSLARHHRTH, and YSCSECGKSFAISSDLAGHRRRTH.

It belongs to the krueppel C2H2-type zinc-finger protein family.

The protein localises to the nucleus. May be involved in transcriptional regulation. In Xenopus laevis (African clawed frog), this protein is Oocyte zinc finger protein XlCOF7.2.